The sequence spans 556 residues: Energy-dependent translational throttle protein EttA (556 aa).

ABC transporter domains lie at 7–260 (YTMH…EQEQ) and 325–551 (IEVQ…RIKY). 40-47 (GLNGAGKS) serves as a coordination point for ATP. An arm region spans residues 96-140 (SEVKNALTRLDEVYALYADPDADFDKLAAEQANLEAIIQAHDGHN). Residues 243-323 (GNYSSWLEQK…IPPGPRLGDK (81 aa)) form a ptIM region. 357 to 364 (GANGAGKS) contributes to the ATP binding site.

This sequence belongs to the ABC transporter superfamily. ABCF family. Translational throttle EttA subfamily. Monomer. Probably contacts ribosomal proteins L1, L5, L33 and S7, the 16S and 23S rRNA and the P-site containing tRNA(fMet).

It is found in the cytoplasm. The enzyme catalyses ATP + H2O = ADP + phosphate + H(+). In terms of biological role, a translation factor that gates the progression of the 70S ribosomal initiation complex (IC, containing tRNA(fMet) in the P-site) into the translation elongation cycle by using a mechanism sensitive to the ATP/ADP ratio. Binds to the 70S ribosome E-site where it modulates the state of the translating ribosome during subunit translocation. ATP hydrolysis probably frees it from the ribosome, which can enter the elongation phase. The sequence is that of Energy-dependent translational throttle protein EttA from Haemophilus influenzae (strain ATCC 51907 / DSM 11121 / KW20 / Rd).